The sequence spans 81 residues: Acyl carrier protein (81 aa).

Positions 4–79 constitute a Carrier domain; sequence DEVYSRVRKI…DAVNYILSKK (76 aa). Residue serine 39 is modified to O-(pantetheine 4'-phosphoryl)serine.

Belongs to the acyl carrier protein (ACP) family. In terms of processing, 4'-phosphopantetheine is transferred from CoA to a specific serine of apo-ACP by AcpS. This modification is essential for activity because fatty acids are bound in thioester linkage to the sulfhydryl of the prosthetic group.

It localises to the cytoplasm. Its pathway is lipid metabolism; fatty acid biosynthesis. Functionally, carrier of the growing fatty acid chain in fatty acid biosynthesis. The protein is Acyl carrier protein of Synechococcus sp. (strain JA-3-3Ab) (Cyanobacteria bacterium Yellowstone A-Prime).